The sequence spans 576 residues: uncharacterized protein (576 aa).

Composition is skewed to polar residues over residues 1-21 (MSTN…QSAS) and 28-40 (HTTS…TYQL). Residues 1–40 (MSTNPNAGIQPLTNSISQSASAHPELYHTTSHESVSTYQL) are disordered. Helical transmembrane passes span 149–169 (FASS…HISL), 173–193 (LLTM…WAPL), 200–220 (KLPL…VAVA), 231–251 (FFSG…FADM), 261–281 (ITIF…IGGF), 291–311 (WTEY…YLFC), 366–386 (PIVF…YLLL), 401–421 (MGVA…GSAI), 446–466 (LPPM…LSWS), 472–492 (VHWI…LLIF), 503–525 (YLFR…AAGF), and 542–562 (GSLL…FFFF).

This sequence belongs to the major facilitator superfamily. CAR1 family.

Its subcellular location is the endoplasmic reticulum. It localises to the golgi apparatus. It is found in the membrane. This is an uncharacterized protein from Schizosaccharomyces pombe (strain 972 / ATCC 24843) (Fission yeast).